Reading from the N-terminus, the 131-residue chain is Large ribosomal subunit protein bL17 (131 aa).

It belongs to the bacterial ribosomal protein bL17 family. As to quaternary structure, part of the 50S ribosomal subunit. Contacts protein L32.

The sequence is that of Large ribosomal subunit protein bL17 from Vesicomyosocius okutanii subsp. Calyptogena okutanii (strain HA).